The following is a 295-amino-acid chain: Pantothenate synthetase (295 aa).

Met29–His36 is a binding site for ATP. His36 acts as the Proton donor in catalysis. Gln60 contributes to the (R)-pantoate binding site. Gln60 lines the beta-alanine pocket. Gly158–Asp161 is a binding site for ATP. Gln164 serves as a coordination point for (R)-pantoate. ATP-binding positions include Val187 and Leu195 to Arg198.

Belongs to the pantothenate synthetase family. In terms of assembly, homodimer.

Its subcellular location is the cytoplasm. It carries out the reaction (R)-pantoate + beta-alanine + ATP = (R)-pantothenate + AMP + diphosphate + H(+). The protein operates within cofactor biosynthesis; (R)-pantothenate biosynthesis; (R)-pantothenate from (R)-pantoate and beta-alanine: step 1/1. Catalyzes the condensation of pantoate with beta-alanine in an ATP-dependent reaction via a pantoyl-adenylate intermediate. This chain is Pantothenate synthetase, found in Paenarthrobacter aurescens (strain TC1).